The sequence spans 509 residues: ATP synthase subunit alpha (509 aa).

G169–T176 serves as a coordination point for ATP.

This sequence belongs to the ATPase alpha/beta chains family. F-type ATPases have 2 components, CF(1) - the catalytic core - and CF(0) - the membrane proton channel. CF(1) has five subunits: alpha(3), beta(3), gamma(1), delta(1), epsilon(1). CF(0) has three main subunits: a(1), b(2) and c(9-12). The alpha and beta chains form an alternating ring which encloses part of the gamma chain. CF(1) is attached to CF(0) by a central stalk formed by the gamma and epsilon chains, while a peripheral stalk is formed by the delta and b chains.

It is found in the cell inner membrane. The catalysed reaction is ATP + H2O + 4 H(+)(in) = ADP + phosphate + 5 H(+)(out). Its function is as follows. Produces ATP from ADP in the presence of a proton gradient across the membrane. The alpha chain is a regulatory subunit. In Rhizobium etli (strain CIAT 652), this protein is ATP synthase subunit alpha.